The primary structure comprises 488 residues: Sucrose 6(F)-phosphate phosphorylase (488 aa).

Residues Asp-49, His-87, Arg-195 to Asp-197, Glu-238, His-295 to Asp-296, Asp-342 to Gln-345, and Arg-399 contribute to the sucrose 6(F)-phosphate site. The Nucleophile role is filled by Asp-197. Glu-238 serves as the catalytic Proton donor/acceptor.

It belongs to the glycosyl hydrolase 13 family. Sucrose phosphorylase subfamily. As to quaternary structure, monomer.

The enzyme catalyses sucrose 6(F)-phosphate + phosphate = beta-D-fructose 6-phosphate + alpha-D-glucose 1-phosphate. Catalyzes the reversible phosphorolysis of sucrose 6(F)-phosphate into alpha-D-glucose 1-phosphate (Glc1P) and D-fructose 6-phosphate. May be involved in a new pathway for the degradation of sucrose, which could become phosphorylated on its fructose moiety during uptake via a PTS system. To a lesser extent, can also reversibly act on sucrose in vitro. Is also able to catalyze transglycosylation reactions in vitro. The sequence is that of Sucrose 6(F)-phosphate phosphorylase from Thermoanaerobacterium thermosaccharolyticum (strain ATCC 7956 / DSM 571 / NCIMB 9385 / NCA 3814 / NCTC 13789 / WDCM 00135 / 2032) (Clostridium thermosaccharolyticum).